An 86-amino-acid polypeptide reads, in one-letter code: UPF0297 protein LSL_1110 (86 aa).

This sequence belongs to the UPF0297 family.

The protein is UPF0297 protein LSL_1110 of Ligilactobacillus salivarius (strain UCC118) (Lactobacillus salivarius).